The primary structure comprises 491 residues: Arginine decarboxylase (491 aa).

The residue at position 227 (Lys-227) is an N6-(pyridoxal phosphate)lysine.

It belongs to the Orn/Lys/Arg decarboxylase class-I family. Pyridoxal 5'-phosphate serves as cofactor.

The protein localises to the cytoplasm. The catalysed reaction is L-arginine + H(+) = agmatine + CO2. It participates in amine and polyamine biosynthesis; agmatine biosynthesis; agmatine from L-arginine: step 1/1. Its function is as follows. Catalyzes the formation of agmatine from arginine. This Halalkalibacterium halodurans (strain ATCC BAA-125 / DSM 18197 / FERM 7344 / JCM 9153 / C-125) (Bacillus halodurans) protein is Arginine decarboxylase (speA).